We begin with the raw amino-acid sequence, 1029 residues long: Protein translocase subunit SecA (1029 aa).

Residues Gln-143, 161–165, and Asp-661 contribute to the ATP site; that span reads GEGKT. Residues 953-1029 are disordered; the sequence is EQEQKKSQVQ…GKKYKNCCGK (77 aa). Basic and acidic residues-rich tracts occupy residues 966 to 975 and 984 to 996; these read LVARHEKAET and PEGR…ENGK. The Zn(2+) site is built by Cys-1015, Cys-1017, Cys-1026, and Cys-1027.

It belongs to the SecA family. As to quaternary structure, monomer and homodimer. Part of the essential Sec protein translocation apparatus which comprises SecA, SecYEG and auxiliary proteins SecDF. Other proteins may also be involved. The cofactor is Zn(2+).

The protein localises to the cell inner membrane. Its subcellular location is the cytoplasm. It catalyses the reaction ATP + H2O + cellular proteinSide 1 = ADP + phosphate + cellular proteinSide 2.. Its function is as follows. Part of the Sec protein translocase complex. Interacts with the SecYEG preprotein conducting channel. Has a central role in coupling the hydrolysis of ATP to the transfer of proteins into and across the cell membrane, serving as an ATP-driven molecular motor driving the stepwise translocation of polypeptide chains across the membrane. The polypeptide is Protein translocase subunit SecA (Chlorobium phaeobacteroides (strain BS1)).